The sequence spans 505 residues: MSQIIGHISQVIGPVVDVYFEGTDAELMLPSIHDALEIKRPNGKILVVEVQQHIGENTVRTVAMDSTDGLQRGMKVYPTGGPITMPIGEQIKGRLMNVVGDSIDGMKSLDRTGAYSIHRDPPKFEDLTTVQEVLFTGIKVIDLLEPYAKGGKIGLFGGAGVGKTVLIQELINNIAKKHNGFSVFAGVGERTREGNDLLREMIESGVIRYGEAFKESMEKGDWDLSKVDYNELEKSQVSLIFGQMNEPPGARASVALSGLTVAESFRDAGKEGEKRDILFFIDNIFRFTQAGSEVSALLGRMPSAVGYQPTLATEMGAMQERITSTRKGSITSVQAVYVPADDLTDPAPATTFSHLDATTVLDRKITELGIYPAVDPLASTSRILDPHIVGQEHYDVAQRVKQILQRNKELQDIISILGMEELSEEDKLVVNRARRVQRFLSQPFAVAEQFTGVPGVMVGIEDTIKGFRMILDGEVDNLPEQAFLNVGTIEEAIEKGKKLLEQAKK.

Position 157-164 (157-164) interacts with ATP; it reads GGAGVGKT.

This sequence belongs to the ATPase alpha/beta chains family. As to quaternary structure, F-type ATPases have 2 components, CF(1) - the catalytic core - and CF(0) - the membrane proton channel. CF(1) has five subunits: alpha(3), beta(3), gamma(1), delta(1), epsilon(1). CF(0) has three main subunits: a(1), b(2) and c(9-12). The alpha and beta chains form an alternating ring which encloses part of the gamma chain. CF(1) is attached to CF(0) by a central stalk formed by the gamma and epsilon chains, while a peripheral stalk is formed by the delta and b chains.

It localises to the cell inner membrane. It catalyses the reaction ATP + H2O + 4 H(+)(in) = ADP + phosphate + 5 H(+)(out). Produces ATP from ADP in the presence of a proton gradient across the membrane. The catalytic sites are hosted primarily by the beta subunits. This chain is ATP synthase subunit beta, found in Bacteroides thetaiotaomicron (strain ATCC 29148 / DSM 2079 / JCM 5827 / CCUG 10774 / NCTC 10582 / VPI-5482 / E50).